Consider the following 330-residue polypeptide: PDZ and LIM domain protein 4 (330 aa).

The PDZ domain occupies 8–84 (RGPSPWGFRL…QLLLSVSRAE (77 aa)). Disordered regions lie at residues 106 to 152 (EPEP…SSSA) and 163 to 182 (LHISPSQSTDPLKSLPRNRN). Residues 139–152 (QHPQPSRPHASSSA) show a composition bias toward polar residues. Residues 255 to 305 (CTRCGNGIVGTIVKARDKLYHPECFMCDDCGLNLKQRGYFFIEEQLYCETH) form the LIM zinc-binding domain.

As to quaternary structure, interacts (via LIM domain) with PTPN13. Interacts (via PDZ domain) with ACTN1.

Its subcellular location is the cytoplasm. It is found in the cytoskeleton. The protein localises to the cell projection. The protein resides in the dendritic spine. It localises to the early endosome membrane. Its subcellular location is the recycling endosome membrane. It is found in the nucleus. The protein localises to the perinuclear region. The protein resides in the lamellipodium. It localises to the synapse. Its subcellular location is the synaptosome. In terms of biological role, suppresses SRC activation by recognizing and binding to active SRC and facilitating PTPN13-mediated dephosphorylation of SRC 'Tyr-419' leading to its inactivation. Inactivated SRC dissociates from this protein allowing the initiation of a new SRC inactivation cycle. Involved in reorganization of the actin cytoskeleton. In nonmuscle cells, binds to ACTN1 (alpha-actinin-1), increases the affinity of ACTN1 to F-actin (filamentous actin), and promotes formation of actin stress fibers. Involved in regulation of the synaptic AMPA receptor transport in dendritic spines of hippocampal pyramidal neurons directing the receptors toward an insertion at the postsynaptic membrane. Links endosomal surface-internalized GRIA1-containing AMPA receptors to the alpha-actinin/actin cytoskeleton. Increases AMPA receptor-mediated excitatory postsynaptic currents in neurons. The protein is PDZ and LIM domain protein 4 (PDLIM4) of Gallus gallus (Chicken).